A 711-amino-acid polypeptide reads, in one-letter code: Receptor-like protein 43 (711 aa).

A signal peptide spans 1–30; it reads MKGFWNSKSTIRITLSFIFLFISQFSDVLA. The Extracellular segment spans residues 31–666; it reads APTRHLCRPE…EDEEVISWIA (636 aa). 5 N-linked (GlcNAc...) asparagine glycosylation sites follow: asparagine 78, asparagine 114, asparagine 143, asparagine 167, and asparagine 191. 8 LRR repeats span residues 120 to 143, 144 to 168, 170 to 192, 193 to 216, 218 to 240, 241 to 266, 268 to 288, and 289 to 316; these read LHFLTTLDLSFNDFKGQIMSSIEN, LSHLTYLDLSFNHFSGQVPSSIGNL, HLTFLDLYCNQFSGQVPSSIGNL, SHLTTLELSFNRFFGQFPSSIGGL, HLTTLNLFVNNFLGQIPSSIGNL, SNLTSLYLCKNNFSGQIPSFIGNLSQ, TRLDLSSNNFFGEIPGWLWTL, and PNLFYVNLSYNTFIGFQRPNKPEPSMGH. 4 N-linked (GlcNAc...) asparagine glycosylation sites follow: asparagine 239, asparagine 242, asparagine 252, and asparagine 263. Residues asparagine 295, asparagine 323, asparagine 347, asparagine 362, and asparagine 372 are each glycosylated (N-linked (GlcNAc...) asparagine). One copy of the LRR 9; degenerate repeat lies at 317 to 334; it reads LLGSNNNFTGKIPSFICE. LRR repeat units follow at residues 335–358, 360–384, 386–406, 407–430, 431–452, 453–476, 519–543, 544–567, 568–591, and 593–616; these read LRSLETLDLSDNNFSGLIPRCMGN, KSNLSHLNLRQNNLSGGLPKHIFEI, RSLDVGHNQLVGKLPRSLRFF, STLEVLNVESNRINDTFPFWLTSL, PKLQVLVLRSNAFHGPIHEASF, LKLRIIDISHNHFNGTLPSDYFVK, LTIYTALDFSGNKFEGEIPKSIGLL, KELLVLNLSNNAFTGHIPSSMGKL, TALESLDVSQNKLYGEIPQEIGNL, and FLSCMNFSHNQLAGLVPGGQQFLT. N-linked (GlcNAc...) asparagine glycosylation occurs at asparagine 420. The N-linked (GlcNAc...) asparagine glycan is linked to asparagine 466. Asparagine 550, asparagine 590, and asparagine 598 each carry an N-linked (GlcNAc...) asparagine glycan. Residues 667–687 form a helical membrane-spanning segment; sequence AAIGFIPGIVLGLTIGYILVF. At 688–711 the chain is on the cytoplasmic side; that stretch reads YKPEWFIKTFGRNNCRRRSTTTTH.

Belongs to the RLP family.

It is found in the cell membrane. In Arabidopsis thaliana (Mouse-ear cress), this protein is Receptor-like protein 43.